Reading from the N-terminus, the 363-residue chain is MDNYTYSELLKSLQNKCDNIALIIKPEKVKQKLERIEKEQEDPNFWQDVLKARDTNKEKVRLNRLLETYQKTKNALDESVELFEIAQNDNDEVTLSLLYEEAPILEHGVQKVEIEIMLSGEHDASNAIITIQPGAGGTESQDWASILYRMYLRWAERRGFKSEILDYQDGEEAGIKGVAFIIKGENAYGYLKNESGVHRLVRISPFDANAKRHTSFASVQISPELDDDIDIEIDEKDVRYDYYRASGAGGQHVNKTESAVRITHFPTGIVVQCQNDRSQHKNKASALKMLKSKLYELELEKQQSTAKNEEKSEIGWGHQIRSYVLAPYQQVKDARSNIAYSNVEAILDGDIDAILEGVLIAKA.

At Gln251 the chain carries N5-methylglutamine.

Belongs to the prokaryotic/mitochondrial release factor family. Post-translationally, methylated by PrmC. Methylation increases the termination efficiency of RF2.

It localises to the cytoplasm. Its function is as follows. Peptide chain release factor 2 directs the termination of translation in response to the peptide chain termination codons UGA and UAA. This Helicobacter acinonychis (strain Sheeba) protein is Peptide chain release factor 2.